The following is a 292-amino-acid chain: Tyrosine isonitrile desaturase (292 aa).

The Fe cation site is built by His-110, Asp-112, and His-259.

Belongs to the TfdA dioxygenase family. It depends on Fe(2+) as a cofactor.

The enzyme catalyses (2S)-3-(4-hydroxyphenyl)-2-isocyanopropanoate + 2-oxoglutarate + O2 = (2E)-3-(4-hydroxyphenyl)-2-isocyanoprop-2-enoate + succinate + CO2 + H2O. Catalyzes the 2-oxoglutarate-dependent oxidation of tyrosine isonitrile. The chain is Tyrosine isonitrile desaturase from Erwinia amylovora (strain CFBP1430).